The sequence spans 121 residues: EFTLGQEINVDIFADVKKVDVTGTSKGKGFQGGVKRWNFRTQDATHGNSLSHRVLGSIGQNQTPGRVFKGKKMAGHLGNERVTVQSLEVVRVDAERKLLLVKGAVPGATGSDVIVKPAVKA.

Gln62 carries the N5-methylglutamine modification.

Belongs to the universal ribosomal protein uL3 family. In terms of assembly, part of the 50S ribosomal subunit. Forms a cluster with proteins L14 and L19. Methylated by PrmB.

Functionally, one of the primary rRNA binding proteins, it binds directly near the 3'-end of the 23S rRNA, where it nucleates assembly of the 50S subunit. This chain is Large ribosomal subunit protein uL3 (rplC), found in Aggregatibacter actinomycetemcomitans (Actinobacillus actinomycetemcomitans).